Reading from the N-terminus, the 361-residue chain is Phosphate acyltransferase (361 aa).

The disordered stretch occupies residues 342–361 (ADGAAAEQGPTPRRTAPRQT).

The protein belongs to the PlsX family. In terms of assembly, homodimer. Probably interacts with PlsY.

The protein resides in the cytoplasm. The catalysed reaction is a fatty acyl-[ACP] + phosphate = an acyl phosphate + holo-[ACP]. Its pathway is lipid metabolism; phospholipid metabolism. Catalyzes the reversible formation of acyl-phosphate (acyl-PO(4)) from acyl-[acyl-carrier-protein] (acyl-ACP). This enzyme utilizes acyl-ACP as fatty acyl donor, but not acyl-CoA. This chain is Phosphate acyltransferase, found in Anaeromyxobacter sp. (strain K).